Here is a 355-residue protein sequence, read N- to C-terminus: Peptide chain release factor 1 (355 aa).

Glutamine 230 bears the N5-methylglutamine mark.

This sequence belongs to the prokaryotic/mitochondrial release factor family. In terms of processing, methylated by PrmC. Methylation increases the termination efficiency of RF1.

Its subcellular location is the cytoplasm. Functionally, peptide chain release factor 1 directs the termination of translation in response to the peptide chain termination codons UAG and UAA. The polypeptide is Peptide chain release factor 1 (Geobacter sulfurreducens (strain ATCC 51573 / DSM 12127 / PCA)).